We begin with the raw amino-acid sequence, 371 residues long: Bifunctional enzyme IspD/IspF (371 aa).

Residues 1 to 210 are 2-C-methyl-D-erythritol 4-phosphate cytidylyltransferase; it reads MSEISLIMLA…LDLPTPSFEI (210 aa). The interval 211-371 is 2-C-methyl-D-erythritol 2,4-cyclodiphosphate synthase; the sequence is FTGNGFDVHE…NLKYFDWTRL (161 aa). A divalent metal cation contacts are provided by aspartate 217 and histidine 219. Residues 217–219 and 243–244 each bind 4-CDP-2-C-methyl-D-erythritol 2-phosphate; these read DVH and HS. An a divalent metal cation-binding site is contributed by histidine 251. Residues 265 to 267, 270 to 274, 341 to 344, phenylalanine 348, and arginine 351 each bind 4-CDP-2-C-methyl-D-erythritol 2-phosphate; these read DIG, YPDTD, and TTTE.

It in the N-terminal section; belongs to the IspD/TarI cytidylyltransferase family. IspD subfamily. In the C-terminal section; belongs to the IspF family. Requires a divalent metal cation as cofactor.

The catalysed reaction is 2-C-methyl-D-erythritol 4-phosphate + CTP + H(+) = 4-CDP-2-C-methyl-D-erythritol + diphosphate. It catalyses the reaction 4-CDP-2-C-methyl-D-erythritol 2-phosphate = 2-C-methyl-D-erythritol 2,4-cyclic diphosphate + CMP. It functions in the pathway isoprenoid biosynthesis; isopentenyl diphosphate biosynthesis via DXP pathway; isopentenyl diphosphate from 1-deoxy-D-xylulose 5-phosphate: step 2/6. The protein operates within isoprenoid biosynthesis; isopentenyl diphosphate biosynthesis via DXP pathway; isopentenyl diphosphate from 1-deoxy-D-xylulose 5-phosphate: step 4/6. Its function is as follows. Bifunctional enzyme that catalyzes the formation of 4-diphosphocytidyl-2-C-methyl-D-erythritol from CTP and 2-C-methyl-D-erythritol 4-phosphate (MEP) (IspD), and catalyzes the conversion of 4-diphosphocytidyl-2-C-methyl-D-erythritol 2-phosphate (CDP-ME2P) to 2-C-methyl-D-erythritol 2,4-cyclodiphosphate (ME-CPP) with a corresponding release of cytidine 5-monophosphate (CMP) (IspF). This chain is Bifunctional enzyme IspD/IspF, found in Campylobacter jejuni subsp. jejuni serotype O:23/36 (strain 81-176).